Reading from the N-terminus, the 833-residue chain is Putative GPI inositol-deacylase C (833 aa).

Serine 130 is an active-site residue. N-linked (GlcNAc...) asparagine glycans are attached at residues asparagine 191 and asparagine 456. The next 5 membrane-spanning stretches (helical) occupy residues 521 to 541, 560 to 580, 617 to 637, 672 to 692, and 723 to 743; these read ILFI…QFHA, YLLT…LSQV, VLAP…TELV, TVFV…QLAF, and TICV…AVWI. Asparagine 772 carries an N-linked (GlcNAc...) asparagine glycan. Residues 787 to 807 traverse the membrane as a helical segment; that stretch reads LLLAYTSLHCLFYGMMQAFMI.

The protein belongs to the GPI inositol-deacylase family.

It localises to the endoplasmic reticulum membrane. In terms of biological role, involved in inositol deacylation of GPI-anchored proteins which plays important roles in the quality control and ER-associated degradation of GPI-anchored proteins. The polypeptide is Putative GPI inositol-deacylase C (BST1C) (Yarrowia lipolytica (strain CLIB 122 / E 150) (Yeast)).